We begin with the raw amino-acid sequence, 689 residues long: Elongation factor G (689 aa).

In terms of domain architecture, tr-type G spans 8 to 282; sequence ERTRNIGIMA…GVVAYMPSPL (275 aa). GTP contacts are provided by residues 17 to 24, 81 to 85, and 135 to 138; these read AHIDAGKT, DTPGH, and NKMD.

Belongs to the TRAFAC class translation factor GTPase superfamily. Classic translation factor GTPase family. EF-G/EF-2 subfamily.

The protein resides in the cytoplasm. Functionally, catalyzes the GTP-dependent ribosomal translocation step during translation elongation. During this step, the ribosome changes from the pre-translocational (PRE) to the post-translocational (POST) state as the newly formed A-site-bound peptidyl-tRNA and P-site-bound deacylated tRNA move to the P and E sites, respectively. Catalyzes the coordinated movement of the two tRNA molecules, the mRNA and conformational changes in the ribosome. The sequence is that of Elongation factor G from Alkaliphilus metalliredigens (strain QYMF).